Consider the following 76-residue polypeptide: U14-hexatoxin-Hi1a (76 aa).

An N-terminal signal peptide occupies residues 1–18; it reads MMQLAVLICLSLVVNTFA. 3 disulfides stabilise this stretch: Cys21/Cys34, Cys27/Cys39, and Cys33/Cys61.

In terms of tissue distribution, expressed by the venom gland.

It localises to the secreted. Probable ion channel inhibitor. The polypeptide is U14-hexatoxin-Hi1a (Hadronyche infensa (Fraser island funnel-web spider)).